Here is a 431-residue protein sequence, read N- to C-terminus: Glutamyl-tRNA(Gln) amidotransferase subunit A (431 aa).

Residues Lys-55 and Ser-130 each act as charge relay system in the active site. Ser-154 acts as the Acyl-ester intermediate in catalysis.

Belongs to the amidase family. GatA subfamily. In terms of assembly, heterotrimer of A, B and C subunits.

It carries out the reaction L-glutamyl-tRNA(Gln) + L-glutamine + ATP + H2O = L-glutaminyl-tRNA(Gln) + L-glutamate + ADP + phosphate + H(+). Functionally, allows the formation of correctly charged Gln-tRNA(Gln) through the transamidation of misacylated Glu-tRNA(Gln) in organisms which lack glutaminyl-tRNA synthetase. The reaction takes place in the presence of glutamine and ATP through an activated gamma-phospho-Glu-tRNA(Gln). This is Glutamyl-tRNA(Gln) amidotransferase subunit A from Methanococcus maripaludis (strain C7 / ATCC BAA-1331).